Here is a 356-residue protein sequence, read N- to C-terminus: Neurogenic differentiation factor 1 (356 aa).

The segment at 1 to 94 (MTKSYSESGL…GPKKKKMTKA (94 aa)) is disordered. Over residues 58-78 (EEEDEDEDLEEEEEEEEEDDD) the composition is skewed to acidic residues. Basic residues predominate over residues 81-93 (PKRRGPKKKKMTK). Residues 87 to 93 (KKKKMTK) carry the Nuclear localization signal motif. The 53-residue stretch at 101-153 (LRRMKANARERNRMHGLNAALDNLRKVVPCYSKTQKLSKIETLRLAKNYIWAL) folds into the bHLH domain. 4 positions are modified to phosphoserine: Ser162, Ser259, Ser266, and Ser274. Residue Ser335 is modified to Phosphoserine; by CaMK2.

In terms of assembly, efficient DNA-binding requires dimerization with another bHLH protein. Heterodimer with TCF3/E47; the heterodimer is inhibited in presence of ID2, but not NR0B2, to E-box element. Interacts with EP300; the interaction is inhibited by NR0B2. Interacts with RREB1. Interacts with ATOH8. Phosphorylated. In islet cells, phosphorylated on Ser-274 upon glucose stimulation; which may be required for nuclear localization. In activated neurons, phosphorylated on Ser-335; which promotes dendritic growth. Phosphorylated by MAPK1; phosphorylation regulates heterodimerization and DNA-binding activities. Phosphorylation on Ser-266 and Ser-274 increases transactivation on the insulin promoter in glucose-stimulated insulinoma cells.

Its subcellular location is the cytoplasm. The protein resides in the nucleus. Functionally, acts as a transcriptional activator: mediates transcriptional activation by binding to E box-containing promoter consensus core sequences 5'-CANNTG-3'. Associates with the p300/CBP transcription coactivator complex to stimulate transcription of the secretin gene as well as the gene encoding the cyclin-dependent kinase inhibitor CDKN1A. Contributes to the regulation of several cell differentiation pathways, like those that promote the formation of early retinal ganglion cells, inner ear sensory neurons, granule cells forming either the cerebellum or the dentate gyrus cell layer of the hippocampus, endocrine islet cells of the pancreas and enteroendocrine cells of the small intestine. Together with PAX6 or SIX3, is required for the regulation of amacrine cell fate specification. Also required for dendrite morphogenesis and maintenance in the cerebellar cortex. Associates with chromatin to enhancer regulatory elements in genes encoding key transcriptional regulators of neurogenesis. The protein is Neurogenic differentiation factor 1 (NEUROD1) of Homo sapiens (Human).